Consider the following 761-residue polypeptide: 1,2-alpha-glucosylglycerol phosphorylase (761 aa).

327–328 contributes to the glycerol binding site; it reads YQ. 333–334 provides a ligand contact to substrate; that stretch reads WD. The active-site Proton donor is the Glu475. 587 to 588 lines the substrate pocket; that stretch reads KQ.

Belongs to the glycosyl hydrolase 65 family. In terms of assembly, homodimer.

The catalysed reaction is 2-O-(alpha-D-glucopyranosyl)glycerol + phosphate = beta-D-glucose 1-phosphate + glycerol. Catalyzes both the (1) reversible phosphorolysis of 2-O-alpha-D-glucopyranosyl-sn-glycerol (GG) from beta-D-glucose 1-phosphate (betaGlc1P) and glycerol and (2) the hydrolysis of betaGlc1P. the betaGlc1P hydrolysis is a glucosyl-transfer reaction to an acceptor water molecule that produces an anomer-inverted alpha-glucose, not a phosphatase-type reaction. In the absence of glycerol produces alpha-D-glucopyranose and phosphate from beta-D-glucopyranose 1-phosphate. This is 1,2-alpha-glucosylglycerol phosphorylase from Bacillus selenitireducens (strain ATCC 700615 / DSM 15326 / MLS10).